The primary structure comprises 244 residues: Small ribosomal subunit protein uS3 (244 aa).

The region spanning I39–E110 is the KH type-2 domain. Residues E215–G244 are disordered. The segment covering P225–R234 has biased composition (basic residues). The segment covering Q235–G244 has biased composition (basic and acidic residues).

The protein belongs to the universal ribosomal protein uS3 family. Part of the 30S ribosomal subunit. Forms a tight complex with proteins S10 and S14.

Functionally, binds the lower part of the 30S subunit head. Binds mRNA in the 70S ribosome, positioning it for translation. The polypeptide is Small ribosomal subunit protein uS3 (Synechococcus sp. (strain ATCC 27144 / PCC 6301 / SAUG 1402/1) (Anacystis nidulans)).